Consider the following 405-residue polypeptide: Na(+)-translocating NADH-quinone reductase subunit F (405 aa).

The chain crosses the membrane as a helical span at residues Ile-3–Phe-23. Residues Gly-32 to Val-124 form the 2Fe-2S ferredoxin-type domain. 4 residues coordinate [2Fe-2S] cluster: Cys-67, Cys-73, Cys-76, and Cys-108. One can recognise an FAD-binding FR-type domain in the interval Val-127–Lys-267.

This sequence belongs to the NqrF family. In terms of assembly, composed of six subunits; NqrA, NqrB, NqrC, NqrD, NqrE and NqrF. [2Fe-2S] cluster is required as a cofactor. Requires FAD as cofactor.

It localises to the cell inner membrane. It catalyses the reaction a ubiquinone + n Na(+)(in) + NADH + H(+) = a ubiquinol + n Na(+)(out) + NAD(+). Functionally, NQR complex catalyzes the reduction of ubiquinone-1 to ubiquinol by two successive reactions, coupled with the transport of Na(+) ions from the cytoplasm to the periplasm. The first step is catalyzed by NqrF, which accepts electrons from NADH and reduces ubiquinone-1 to ubisemiquinone by a one-electron transfer pathway. This is Na(+)-translocating NADH-quinone reductase subunit F from Neisseria gonorrhoeae (strain ATCC 700825 / FA 1090).